Consider the following 71-residue polypeptide: MPIIKIRENEPFDVALRRFKRSCEKAGILSEVRRREFYEKPTTERKRAKASAIKRHAKKMARENLKKTKFY.

Belongs to the bacterial ribosomal protein bS21 family.

The chain is Small ribosomal subunit protein bS21 from Wigglesworthia glossinidia brevipalpis.